Here is a 20-residue protein sequence, read N- to C-terminus: Putative antimicrobial protein 2 (20 aa).

Residues 1-20 form a disordered region; that stretch reads DLPECCSATELELDSGKQTS.

In terms of biological role, may have antimicrobial activity. The protein is Putative antimicrobial protein 2 of Cenchritis muricatus (Beaded periwinkle).